The sequence spans 170 residues: Acireductone dioxygenase (170 aa).

His-99, His-101, Glu-105, and His-144 together coordinate Fe(2+). Residues His-99, His-101, Glu-105, and His-144 each coordinate Ni(2+).

Belongs to the acireductone dioxygenase (ARD) family. As to quaternary structure, monomer. The cofactor is Fe(2+). It depends on Ni(2+) as a cofactor.

It catalyses the reaction 1,2-dihydroxy-5-(methylsulfanyl)pent-1-en-3-one + O2 = 3-(methylsulfanyl)propanoate + CO + formate + 2 H(+). The enzyme catalyses 1,2-dihydroxy-5-(methylsulfanyl)pent-1-en-3-one + O2 = 4-methylsulfanyl-2-oxobutanoate + formate + 2 H(+). It functions in the pathway amino-acid biosynthesis; L-methionine biosynthesis via salvage pathway; L-methionine from S-methyl-5-thio-alpha-D-ribose 1-phosphate: step 5/6. Functionally, catalyzes 2 different reactions between oxygen and the acireductone 1,2-dihydroxy-3-keto-5-methylthiopentene (DHK-MTPene) depending upon the metal bound in the active site. Fe-containing acireductone dioxygenase (Fe-ARD) produces formate and 2-keto-4-methylthiobutyrate (KMTB), the alpha-ketoacid precursor of methionine in the methionine recycle pathway. Ni-containing acireductone dioxygenase (Ni-ARD) produces methylthiopropionate, carbon monoxide and formate, and does not lie on the methionine recycle pathway. This is Acireductone dioxygenase from Bacillus thuringiensis (strain Al Hakam).